We begin with the raw amino-acid sequence, 357 residues long: UDP-N-acetylglucosamine--N-acetylmuramyl-(pentapeptide) pyrophosphoryl-undecaprenol N-acetylglucosamine transferase (357 aa).

UDP-N-acetyl-alpha-D-glucosamine-binding positions include 12–14 (TGG), Asn-124, Arg-162, Ser-190, Ile-243, 262–267 (ALTVAE), and Gln-288.

It belongs to the glycosyltransferase 28 family. MurG subfamily.

The protein resides in the cell inner membrane. The enzyme catalyses di-trans,octa-cis-undecaprenyl diphospho-N-acetyl-alpha-D-muramoyl-L-alanyl-D-glutamyl-meso-2,6-diaminopimeloyl-D-alanyl-D-alanine + UDP-N-acetyl-alpha-D-glucosamine = di-trans,octa-cis-undecaprenyl diphospho-[N-acetyl-alpha-D-glucosaminyl-(1-&gt;4)]-N-acetyl-alpha-D-muramoyl-L-alanyl-D-glutamyl-meso-2,6-diaminopimeloyl-D-alanyl-D-alanine + UDP + H(+). It functions in the pathway cell wall biogenesis; peptidoglycan biosynthesis. Cell wall formation. Catalyzes the transfer of a GlcNAc subunit on undecaprenyl-pyrophosphoryl-MurNAc-pentapeptide (lipid intermediate I) to form undecaprenyl-pyrophosphoryl-MurNAc-(pentapeptide)GlcNAc (lipid intermediate II). The protein is UDP-N-acetylglucosamine--N-acetylmuramyl-(pentapeptide) pyrophosphoryl-undecaprenol N-acetylglucosamine transferase of Alcanivorax borkumensis (strain ATCC 700651 / DSM 11573 / NCIMB 13689 / SK2).